Here is a 1172-residue protein sequence, read N- to C-terminus: DNA-directed RNA polymerase subunit beta (1172 aa).

It belongs to the RNA polymerase beta chain family. As to quaternary structure, the RNAP catalytic core consists of 2 alpha, 1 beta, 1 beta' and 1 omega subunit. When a sigma factor is associated with the core the holoenzyme is formed, which can initiate transcription.

It catalyses the reaction RNA(n) + a ribonucleoside 5'-triphosphate = RNA(n+1) + diphosphate. DNA-dependent RNA polymerase catalyzes the transcription of DNA into RNA using the four ribonucleoside triphosphates as substrates. The sequence is that of DNA-directed RNA polymerase subunit beta from Pseudothermotoga lettingae (strain ATCC BAA-301 / DSM 14385 / NBRC 107922 / TMO) (Thermotoga lettingae).